A 637-amino-acid chain; its full sequence is Transmembrane 9 superfamily member 10 (637 aa).

An N-terminal signal peptide occupies residues 1-23 (MAKVRILIFTLVLFFSLNVHIHG). Residues 24 to 274 (FYLPGVAPQD…YLLMADDQIH (251 aa)) are Lumenal-facing. The helical transmembrane segment at 275 to 295 (WFSIVNSMMIVLFLSGMVAMI) threads the bilayer. Residues 296–344 (MLRTLYRDISNYNQLESHEEALEETGWKLVHGDVFRPPTNPELLCVYAG) are Cytoplasmic-facing. Residues 345–365 (TGVQCFGMILVTMIFACLGFL) traverse the membrane as a helical segment. Over 366 to 370 (SPSNR) the chain is Lumenal. The chain crosses the membrane as a helical span at residues 371–391 (GGLMTAMLLLWVFMGLLAGYA). The Cytoplasmic portion of the chain corresponds to 392 to 411 (SSRLYKTLRGTEWKRNALKT). Residues 412-432 (AFMFPATVFVAFFVLNAIIWG) traverse the membrane as a helical segment. Over 433-444 (QKSSGAVPFGTM) the chain is Lumenal. The helical transmembrane segment at 445–465 (FALVVLWFGISVPLVFIGGYI) threads the bilayer. The Cytoplasmic segment spans residues 466 to 494 (GFRKPAPEDPVKTNKIPRQIPTQAWYMNP). The helical transmembrane segment at 495-515 (IFSILIGGILPFGAVFIELFF) threads the bilayer. Residues 516–527 (ILTSIWLHQFYY) are Lumenal-facing. A helical membrane pass occupies residues 528–548 (IFGFLFIVFIILIITCAEITV). Residues 549-566 (VLCYFQLCSEDYQWWWRS) are Cytoplasmic-facing. A helical transmembrane segment spans residues 567–587 (YLTSGSSAVYLFLYAVFYFYT). Over 588-593 (KLEITK) the chain is Lumenal. A helical transmembrane segment spans residues 594–614 (LVSAVLYFGYMLIVSYVFFVF). Residues 615 to 637 (TGAIGFYACFWFTRLIYSSVKID) are Cytoplasmic-facing. The Endoplasmic reticulum export signal signature appears at 626-631 (FTRLIY). A Golgi retention signal motif is present at residues 635 to 637 (KID).

Belongs to the nonaspanin (TM9SF) (TC 9.A.2) family.

The protein resides in the endosome membrane. Its subcellular location is the golgi apparatus membrane. This chain is Transmembrane 9 superfamily member 10, found in Arabidopsis thaliana (Mouse-ear cress).